The chain runs to 156 residues: Small ribosomal subunit protein uS7 (156 aa).

The protein belongs to the universal ribosomal protein uS7 family. In terms of assembly, part of the 30S ribosomal subunit. Contacts proteins S9 and S11.

One of the primary rRNA binding proteins, it binds directly to 16S rRNA where it nucleates assembly of the head domain of the 30S subunit. Is located at the subunit interface close to the decoding center, probably blocks exit of the E-site tRNA. This is Small ribosomal subunit protein uS7 from Synechococcus sp. (strain CC9311).